A 932-amino-acid polypeptide reads, in one-letter code: 2-oxoglutarate dehydrogenase E1 component (932 aa).

This sequence belongs to the alpha-ketoglutarate dehydrogenase family. As to quaternary structure, homodimer. Part of the 2-oxoglutarate dehydrogenase (OGDH) complex composed of E1 (2-oxoglutarate dehydrogenase), E2 (dihydrolipoamide succinyltransferase) and E3 (dihydrolipoamide dehydrogenase); the complex contains multiple copies of the three enzymatic components (E1, E2 and E3). The cofactor is thiamine diphosphate.

It carries out the reaction N(6)-[(R)-lipoyl]-L-lysyl-[protein] + 2-oxoglutarate + H(+) = N(6)-[(R)-S(8)-succinyldihydrolipoyl]-L-lysyl-[protein] + CO2. In terms of biological role, E1 component of the 2-oxoglutarate dehydrogenase (OGDH) complex which catalyzes the decarboxylation of 2-oxoglutarate, the first step in the conversion of 2-oxoglutarate to succinyl-CoA and CO(2). The sequence is that of 2-oxoglutarate dehydrogenase E1 component from Staphylococcus aureus (strain bovine RF122 / ET3-1).